The sequence spans 235 residues: Ribonuclease PH (235 aa).

Phosphate-binding positions include Arg86 and 124–126; that span reads GTR.

It belongs to the RNase PH family. In terms of assembly, homohexameric ring arranged as a trimer of dimers.

The enzyme catalyses tRNA(n+1) + phosphate = tRNA(n) + a ribonucleoside 5'-diphosphate. Phosphorolytic 3'-5' exoribonuclease that plays an important role in tRNA 3'-end maturation. Removes nucleotide residues following the 3'-CCA terminus of tRNAs; can also add nucleotides to the ends of RNA molecules by using nucleoside diphosphates as substrates, but this may not be physiologically important. Probably plays a role in initiation of 16S rRNA degradation (leading to ribosome degradation) during starvation. In Francisella tularensis subsp. novicida (strain U112), this protein is Ribonuclease PH.